The following is a 146-amino-acid chain: Ferredoxin-thioredoxin reductase catalytic chain, chloroplastic (146 aa).

Residues Met1–Arg26 constitute a chloroplast transit peptide. Cys85 lines the [4Fe-4S] cluster pocket. Cys87 acts as the Nucleophile in catalysis. Cys87 and Cys117 are joined by a disulfide. [4Fe-4S] cluster-binding residues include Cys104, Cys106, and Cys115.

Belongs to the ferredoxin thioredoxin reductase beta subunit family. In terms of assembly, heterodimer of subunit A (variable subunit) and subunit B (catalytic subunit). Heterodimeric FTR forms a complex with ferredoxin and thioredoxin. [4Fe-4S] cluster is required as a cofactor.

It is found in the plastid. It localises to the chloroplast. The enzyme catalyses [thioredoxin]-disulfide + 2 reduced [2Fe-2S]-[ferredoxin] + 2 H(+) = [thioredoxin]-dithiol + 2 oxidized [2Fe-2S]-[ferredoxin]. In terms of biological role, catalytic subunit of the ferredoxin-thioredoxin reductase (FTR), which catalyzes the two-electron reduction of thioredoxins by the electrons provided by reduced ferredoxin. This Oryza sativa subsp. japonica (Rice) protein is Ferredoxin-thioredoxin reductase catalytic chain, chloroplastic.